The chain runs to 480 residues: Probable glycosyltransferase 2 (480 aa).

Gly residues predominate over residues 1–21; sequence MGQEGMGYNNGKGGGGGGGGL. Residues 1 to 45 form a disordered region; the sequence is MGQEGMGYNNGKGGGGGGGGLPMTAPRPRGASPLSSHGHHHRSRK. The Cytoplasmic portion of the chain corresponds to 1-49; the sequence is MGQEGMGYNNGKGGGGGGGGLPMTAPRPRGASPLSSHGHHHRSRKIHRT. Residues 50–72 form a helical; Signal-anchor for type II membrane protein membrane-spanning segment; it reads FNNVKITVLCGLVTILVLRGTIG. Residues 73–480 lie on the Lumenal side of the membrane; sequence LNLSLPNQPT…DVKAKISTTS (408 aa). N-linked (GlcNAc...) asparagine glycans are attached at residues N74, N124, N129, and N458.

Belongs to the glycosyltransferase 34 family.

It is found in the golgi apparatus membrane. Its function is as follows. Probable glycosyltransferase that may be involved in the biosynthesis of xyloglucan. The chain is Probable glycosyltransferase 2 from Oryza sativa subsp. indica (Rice).